The sequence spans 63 residues: Hypoxia-inducible lipid droplet-associated protein (63 aa).

The segment at 1–37 (MKHVLNLYLLGVVLTLLSIFVRVMESLEGLLESPSPG) is required for targeting to lipid droplets. Residues 7–23 (LYLLGVVLTLLSIFVRV) traverse the membrane as a helical segment. Positions 31 to 63 (LESPSPGTSWTTRSQLANTEPTKGLPDHPSRSM) are disordered. The span at 35–51 (SPGTSWTTRSQLANTEP) shows a compositional bias: polar residues. Ser-44 carries the phosphoserine modification.

In terms of tissue distribution, highly expressed in renal cell carcinoma cells but barely detectable in adjacent normal kidney tissue. Detected in some cervical and endometrial cancers. Expression also detected in fetal kidney with little or no expression observed in normal adult heart, liver, lung, pancreas, prostate or spinal cord (at protein level).

It localises to the lipid droplet. The protein resides in the secreted. The protein localises to the membrane. Its function is as follows. Increases intracellular lipid accumulation. Stimulates expression of cytokines including IL6, MIF and VEGFA. Enhances cell growth and proliferation. The chain is Hypoxia-inducible lipid droplet-associated protein (HILPDA) from Homo sapiens (Human).